We begin with the raw amino-acid sequence, 500 residues long: MNYFPWLTLIVVLPISAGSLIFFLPHRGNKVIRWYTIFICMLELLLTTYVFCYHFQLDDPLIQLVEDYKWINFFDFDWRLGIDGLSIGPILLTGFITTLATLAAWPVTRDSRLFHFLMLAMYSGQIGSFSSRDLLLFFIMWELELIPVYLLLSMWGGKKRLYSATKFILYTAGGSIFLLLGVLGIGLYGSNEPTLNFETSANQSYPVALEIIFYIGFFIAFAVKSPIIPLHTWLPDTHGEAHYSTCMLLAGILLKMGAYGLVRINMELLPHAHSIFSPWLVVVGTMQIIYAASTSSGQRNLKKRIAYSSVSHMGFIIIGIGSITDTGLNGAILQIISHGFLGAALFFLAGTSYDRIRLIYLDEMGGIAIPMPKIFTMFSILSMASLALPGMSGFVAELIVFFGIITSQKFLLMPKILITFVMAIGMILTPIYSLSMSRQMFYGYKLFNAPNSYFFDSGPRELFVLISIFLPVIGIGIYPDFVLSLSVDKVEAILSNFFYR.

14 helical membrane passes run 4–24 (FPWL…IFFL), 37–57 (IFIC…HFQL), 87–107 (IGPI…AWPV), 113–130 (LFHF…GSFS), 134–154 (LLLF…LLSM), 167–187 (FILY…GIGL), 208–228 (ALEI…SPII), 242–262 (HYST…YGLV), 272–292 (AHSI…IYAA), 305–325 (IAYS…SITD), 330–350 (GAIL…FLAG), 386–406 (LALP…GIIT), 416–436 (ILIT…SLSM), and 462–482 (LFVL…PDFV).

Belongs to the complex I subunit 4 family.

The protein localises to the plastid. Its subcellular location is the chloroplast thylakoid membrane. It catalyses the reaction a plastoquinone + NADH + (n+1) H(+)(in) = a plastoquinol + NAD(+) + n H(+)(out). The catalysed reaction is a plastoquinone + NADPH + (n+1) H(+)(in) = a plastoquinol + NADP(+) + n H(+)(out). The sequence is that of NAD(P)H-quinone oxidoreductase chain 4, chloroplastic from Vitis vinifera (Grape).